Reading from the N-terminus, the 326-residue chain is Beta-ketoacyl-[acyl-carrier-protein] synthase III (326 aa).

Active-site residues include C112 and H251. An ACP-binding region spans residues 252-256 (QANSR). The active site involves N281.

The protein belongs to the thiolase-like superfamily. FabH family. In terms of assembly, homodimer.

It localises to the cytoplasm. It carries out the reaction malonyl-[ACP] + acetyl-CoA + H(+) = 3-oxobutanoyl-[ACP] + CO2 + CoA. The protein operates within lipid metabolism; fatty acid biosynthesis. Catalyzes the condensation reaction of fatty acid synthesis by the addition to an acyl acceptor of two carbons from malonyl-ACP. Catalyzes the first condensation reaction which initiates fatty acid synthesis and may therefore play a role in governing the total rate of fatty acid production. Possesses both acetoacetyl-ACP synthase and acetyl transacylase activities. Its substrate specificity determines the biosynthesis of branched-chain and/or straight-chain of fatty acids. This chain is Beta-ketoacyl-[acyl-carrier-protein] synthase III, found in Clostridium botulinum (strain 657 / Type Ba4).